Reading from the N-terminus, the 344-residue chain is Beta-1,4-galactosyltransferase 4 (344 aa).

Residues 1 to 12 (MGCNPPYLLPYR) are Cytoplasmic-facing. The helical; Signal-anchor for type II membrane protein transmembrane segment at 13–38 (LRLLLFFTLCLTVVGWVTSNYFVDPI) threads the bilayer. At 39–344 (QVIPKAKVFM…NITVDFWTGV (306 aa)) the chain is on the lumenal side. A disulfide bridge connects residues C77 and C118. UDP-alpha-D-galactose contacts are provided by residues 129-133 (PHRNR), 168-170 (FNR), and 195-196 (VD). Residues C189 and C208 are joined by a disulfide bond. D196 is a Mn(2+) binding site. N-linked (GlcNAc...) asparagine glycosylation is present at N220. UDP-alpha-D-galactose is bound by residues Y224 and W256. Position 258–261 (258–261 (GEDD)) interacts with N-acetyl-D-glucosamine. H289 contacts Mn(2+). 289-291 (HTR) is a binding site for UDP-alpha-D-galactose. R301 provides a ligand contact to N-acetyl-D-glucosamine. N335 is a glycosylation site (N-linked (GlcNAc...) asparagine).

Belongs to the glycosyltransferase 7 family. The cofactor is Mn(2+).

The protein localises to the golgi apparatus. It localises to the golgi stack membrane. It catalyses the reaction N-acetyl-D-glucosamine + UDP-alpha-D-galactose = beta-D-galactosyl-(1-&gt;4)-N-acetyl-D-glucosamine + UDP + H(+). The enzyme catalyses a beta-D-GlcNAc-(1-&gt;3)-beta-D-Gal-(1-&gt;4)-beta-D-Glc-(1&lt;-&gt;1)-Cer(d18:1(4E)) + UDP-alpha-D-galactose = a neolactoside nLc4Cer(d18:1(4E)) + UDP + H(+). It participates in protein modification; protein glycosylation. Functionally, galactose (Gal) transferase involved in the biosynthesis of glycoproteins, proteoglycans, and glycosyphingolipids. Catalyzes the transfer of Gal residue via a beta1-&gt;4 linkage from UDP-Gal to the non-reducing terminal N-acetyl glucosamine 6-O-sulfate (6-O-sulfoGlcNAc) in the linearly growing chain of both N- and O-linked keratan sulfate proteoglycans. Cooperates with B3GNT7 N-acetyl glucosamine transferase and CHST6 and CHST1 sulfotransferases to construct and elongate mono- and disulfated disaccharide units [-&gt;3Galbeta1-&gt;4(6-sulfoGlcNAcbeta)1-&gt;] and [-&gt;3(6-sulfoGalbeta)1-&gt;4(6-sulfoGlcNAcbeta)1-&gt;] within keratan sulfate polymer. This Cricetulus griseus (Chinese hamster) protein is Beta-1,4-galactosyltransferase 4 (B4GALT4).